The sequence spans 80 residues: Defensin-like protein 50 (80 aa).

The first 27 residues, 1–27, serve as a signal peptide directing secretion; the sequence is MGFTKIVVTFFLVVMLAVSSSSQNAMA. 4 disulfide bridges follow: cysteine 39–cysteine 79, cysteine 43–cysteine 66, cysteine 52–cysteine 77, and cysteine 56–cysteine 78.

The protein belongs to the DEFL family.

It is found in the secreted. The chain is Defensin-like protein 50 (LCR49) from Arabidopsis thaliana (Mouse-ear cress).